We begin with the raw amino-acid sequence, 46 residues long: MNKMNGTNDEKHFNHFVIALSFIYGLTELGYLLLKDFITIAISLPL.

Residues 12–34 (HFNHFVIALSFIYGLTELGYLLL) form a helical membrane-spanning segment.

Its subcellular location is the cell membrane. This is an uncharacterized protein from Bacillus subtilis (strain 168).